The chain runs to 188 residues: Holliday junction branch migration complex subunit RuvA (188 aa).

The interval 1–62 (MIVGVRGVLV…EDAQLLYGFL (62 aa)) is domain I. Residues 63–135 (ELGEKKLFER…LSGFDTELII (73 aa)) are domain II. The flexible linker stretch occupies residues 135 to 139 (ISASE). Positions 140–188 (PKSLAVAQASEALESLGFKKDKISKALGSCSAVDTAILVKEALKLLQTI) are domain III.

This sequence belongs to the RuvA family. Homotetramer. Forms an RuvA(8)-RuvB(12)-Holliday junction (HJ) complex. HJ DNA is sandwiched between 2 RuvA tetramers; dsDNA enters through RuvA and exits via RuvB. An RuvB hexamer assembles on each DNA strand where it exits the tetramer. Each RuvB hexamer is contacted by two RuvA subunits (via domain III) on 2 adjacent RuvB subunits; this complex drives branch migration. In the full resolvosome a probable DNA-RuvA(4)-RuvB(12)-RuvC(2) complex forms which resolves the HJ.

It is found in the cytoplasm. Its function is as follows. The RuvA-RuvB-RuvC complex processes Holliday junction (HJ) DNA during genetic recombination and DNA repair, while the RuvA-RuvB complex plays an important role in the rescue of blocked DNA replication forks via replication fork reversal (RFR). RuvA specifically binds to HJ cruciform DNA, conferring on it an open structure. The RuvB hexamer acts as an ATP-dependent pump, pulling dsDNA into and through the RuvAB complex. HJ branch migration allows RuvC to scan DNA until it finds its consensus sequence, where it cleaves and resolves the cruciform DNA. In Sulfurimonas denitrificans (strain ATCC 33889 / DSM 1251) (Thiomicrospira denitrificans (strain ATCC 33889 / DSM 1251)), this protein is Holliday junction branch migration complex subunit RuvA.